Here is a 468-residue protein sequence, read N- to C-terminus: Ubiquitin carboxyl-terminal hydrolase 17-like protein B (468 aa).

The tract at residues 1–20 is disordered; the sequence is MVVALSFPEADPAMSPPSAP. One can recognise a USP domain in the interval 51-348; it reads CGLQNTGNSC…NAYVLFYVQQ (298 aa). C60 functions as the Nucleophile in the catalytic mechanism. The active-site Proton acceptor is the H307. The tract at residues 374 to 449 is disordered; the sequence is KKSGEKKHNK…GGQNLRNTEG (76 aa). A compositionally biased stretch (basic and acidic residues) spans 394–403; that stretch reads CENREKRSSK. A compositionally biased stretch (polar residues) spans 422-434; sequence GQKQENTKLTPQE.

Belongs to the peptidase C19 family. USP17 subfamily. Post-translationally, ubiquitinated. In terms of tissue distribution, detected in brain, heart, liver, lung, kidney, ovary and spleen.

It catalyses the reaction Thiol-dependent hydrolysis of ester, thioester, amide, peptide and isopeptide bonds formed by the C-terminal Gly of ubiquitin (a 76-residue protein attached to proteins as an intracellular targeting signal).. Its activity is regulated as follows. Inhibited by ubiquitin aldehyde. Deubiquitinating enzyme that removes conjugated ubiquitin from specific proteins to regulate different cellular processes. The protein is Ubiquitin carboxyl-terminal hydrolase 17-like protein B of Mus musculus (Mouse).